A 453-amino-acid polypeptide reads, in one-letter code: Lysine histidine transporter-like 1 (453 aa).

At methionine 1–lysine 44 the chain is on the cytoplasmic side. 2 helical membrane-spanning segments follow: residues tryptophan 45 to proline 65 and phenylalanine 66 to isoleucine 86. At threonine 87–glycine 122 the chain is on the cytoplasmic side. A helical transmembrane segment spans residues leucine 123 to valine 143. The Extracellular segment spans residues threonine 144–arginine 164. Residues leucine 165 to phenylalanine 185 form a helical membrane-spanning segment. The Cytoplasmic segment spans residues asparagine 186–serine 187. A helical transmembrane segment spans residues isoleucine 188–threonine 208. At alanine 209–threonine 231 the chain is on the extracellular side. A helical transmembrane segment spans residues valine 232–valine 252. The Cytoplasmic segment spans residues leucine 253–valine 276. A helical transmembrane segment spans residues valine 277 to phenylalanine 297. At glycine 298 to threonine 318 the chain is on the extracellular side. Residues alanine 319–phenylalanine 339 form a helical membrane-spanning segment. Residues aspartate 340 to arginine 359 lie on the Cytoplasmic side of the membrane. A helical transmembrane segment spans residues phenylalanine 360 to glycine 382. At leucine 383–alanine 385 the chain is on the extracellular side. A helical transmembrane segment spans residues phenylalanine 386 to tyrosine 408. Over lysine 409–arginine 412 the chain is Cytoplasmic. The chain crosses the membrane as a helical span at residues phenylalanine 413–leucine 433. At serine 434–serine 453 the chain is on the extracellular side.

The protein belongs to the amino acid/polyamine transporter 2 family. Amino acid/auxin permease (AAAP) (TC 2.A.18.2) subfamily.

It localises to the cell membrane. In terms of biological role, amino acid transporter. This is Lysine histidine transporter-like 1 from Arabidopsis thaliana (Mouse-ear cress).